Consider the following 454-residue polypeptide: NADP-specific glutamate dehydrogenase (454 aa).

At S2 the chain carries N-acetylserine. Residue K114 is part of the active site.

It belongs to the Glu/Leu/Phe/Val dehydrogenases family. As to quaternary structure, homohexamer.

It catalyses the reaction L-glutamate + NADP(+) + H2O = 2-oxoglutarate + NH4(+) + NADPH + H(+). This is NADP-specific glutamate dehydrogenase (GDH) from Neurospora intermedia.